We begin with the raw amino-acid sequence, 242 residues long: Uridylate kinase (242 aa).

16–19 contacts ATP; it reads KVSG. Residue glycine 58 coordinates UMP. Glycine 59 and arginine 63 together coordinate ATP. Residues aspartate 78 and 139–146 each bind UMP; that span reads TGNPFCTT. Positions 166, 167, 172, and 175 each coordinate ATP.

This sequence belongs to the UMP kinase family. Homohexamer.

The protein resides in the cytoplasm. It catalyses the reaction UMP + ATP = UDP + ADP. It participates in pyrimidine metabolism; CTP biosynthesis via de novo pathway; UDP from UMP (UMPK route): step 1/1. Its activity is regulated as follows. Inhibited by UTP. In terms of biological role, catalyzes the reversible phosphorylation of UMP to UDP. In Rickettsia felis (strain ATCC VR-1525 / URRWXCal2) (Rickettsia azadi), this protein is Uridylate kinase.